Here is a 388-residue protein sequence, read N- to C-terminus: Succinate--CoA ligase [ADP-forming] subunit beta (388 aa).

In terms of domain architecture, ATP-grasp spans Lys9–His244. Residues Lys46, Gly53–Gly55, Glu99, Thr102, and Glu107 contribute to the ATP site. Mg(2+) contacts are provided by Asn199 and Asp213. Substrate contacts are provided by residues Asn264 and Gly321–Val323.

The protein belongs to the succinate/malate CoA ligase beta subunit family. In terms of assembly, heterotetramer of two alpha and two beta subunits. The cofactor is Mg(2+).

The catalysed reaction is succinate + ATP + CoA = succinyl-CoA + ADP + phosphate. The enzyme catalyses GTP + succinate + CoA = succinyl-CoA + GDP + phosphate. Its pathway is carbohydrate metabolism; tricarboxylic acid cycle; succinate from succinyl-CoA (ligase route): step 1/1. Succinyl-CoA synthetase functions in the citric acid cycle (TCA), coupling the hydrolysis of succinyl-CoA to the synthesis of either ATP or GTP and thus represents the only step of substrate-level phosphorylation in the TCA. The beta subunit provides nucleotide specificity of the enzyme and binds the substrate succinate, while the binding sites for coenzyme A and phosphate are found in the alpha subunit. The protein is Succinate--CoA ligase [ADP-forming] subunit beta of Pseudomonas entomophila (strain L48).